A 271-amino-acid polypeptide reads, in one-letter code: Formamidopyrimidine-DNA glycosylase (271 aa).

The active-site Schiff-base intermediate with DNA is proline 2. Catalysis depends on glutamate 3, which acts as the Proton donor. Residue lysine 58 is the Proton donor; for beta-elimination activity of the active site. Histidine 91, arginine 110, and arginine 152 together coordinate DNA. The segment at 237-271 (RAYGRGGQPCTVCQTELKEIKLGQRTSVFCPSCQR) adopts an FPG-type zinc-finger fold. Arginine 261 functions as the Proton donor; for delta-elimination activity in the catalytic mechanism.

It belongs to the FPG family. Monomer. Zn(2+) serves as cofactor.

The catalysed reaction is Hydrolysis of DNA containing ring-opened 7-methylguanine residues, releasing 2,6-diamino-4-hydroxy-5-(N-methyl)formamidopyrimidine.. The enzyme catalyses 2'-deoxyribonucleotide-(2'-deoxyribose 5'-phosphate)-2'-deoxyribonucleotide-DNA = a 3'-end 2'-deoxyribonucleotide-(2,3-dehydro-2,3-deoxyribose 5'-phosphate)-DNA + a 5'-end 5'-phospho-2'-deoxyribonucleoside-DNA + H(+). Involved in base excision repair of DNA damaged by oxidation or by mutagenic agents. Acts as a DNA glycosylase that recognizes and removes damaged bases. Has a preference for oxidized purines, such as 7,8-dihydro-8-oxoguanine (8-oxoG). Has AP (apurinic/apyrimidinic) lyase activity and introduces nicks in the DNA strand. Cleaves the DNA backbone by beta-delta elimination to generate a single-strand break at the site of the removed base with both 3'- and 5'-phosphates. In Hahella chejuensis (strain KCTC 2396), this protein is Formamidopyrimidine-DNA glycosylase.